The primary structure comprises 427 residues: Light-independent protochlorophyllide reductase subunit N (427 aa).

Residues Cys-32, Cys-57, and Cys-118 each contribute to the [4Fe-4S] cluster site.

Belongs to the BchN/ChlN family. Protochlorophyllide reductase is composed of three subunits; BchL, BchN and BchB. Forms a heterotetramer of two BchB and two BchN subunits. [4Fe-4S] cluster serves as cofactor.

It carries out the reaction chlorophyllide a + oxidized 2[4Fe-4S]-[ferredoxin] + 2 ADP + 2 phosphate = protochlorophyllide a + reduced 2[4Fe-4S]-[ferredoxin] + 2 ATP + 2 H2O. The protein operates within porphyrin-containing compound metabolism; bacteriochlorophyll biosynthesis (light-independent). Component of the dark-operative protochlorophyllide reductase (DPOR) that uses Mg-ATP and reduced ferredoxin to reduce ring D of protochlorophyllide (Pchlide) to form chlorophyllide a (Chlide). This reaction is light-independent. The NB-protein (BchN-BchB) is the catalytic component of the complex. This chain is Light-independent protochlorophyllide reductase subunit N, found in Rubrivivax gelatinosus (strain NBRC 100245 / IL144).